A 141-amino-acid polypeptide reads, in one-letter code: Drosulfakinins (141 aa).

An N-terminal signal peptide occupies residues methionine 1 to alanine 31. The propeptide occupies glutamine 32–aspartate 73. The disordered stretch occupies residues glutamate 49–serine 69. Phenylalanine 82 is subject to Phenylalanine amide. Positions valine 86–alanine 111 are excised as a propeptide. Sulfotyrosine is present on tyrosine 117. Phenylalanine 122 carries the phenylalanine amide modification. Tyrosine 134 carries the post-translational modification Sulfotyrosine. At phenylalanine 139 the chain carries Phenylalanine amide.

The protein belongs to the gastrin/cholecystokinin family.

It localises to the secreted. Its function is as follows. Drosulfakinin-0 (DSK 0) plays diverse biological roles including regulating gut muscle contraction in adults but not in larvae. This is Drosulfakinins from Drosophila erecta (Fruit fly).